Reading from the N-terminus, the 1454-residue chain is Probable cleavage and polyadenylation specificity factor subunit 1 (1454 aa).

The tract at residues 736–765 (KQSNTRKRKRLGHDAIQSSRGGEQSDAIDP) is disordered.

It belongs to the CPSF1 family. As to quaternary structure, CPSF is a heterotetramer composed of four distinct subunits 160 (cpsf-1), 100 (cpsf-2), 70 (cpsf-3), and 30 kDa (cpsf-4).

Its subcellular location is the nucleus. CPSF plays a key role in pre-mRNA 3'-end formation, recognizing the AAUAAA signal sequence and interacting with poly(A)polymerase and other factors to bring about cleavage and poly(A) addition. This subunit is involved in the RNA recognition step of the polyadenylation reaction. The sequence is that of Probable cleavage and polyadenylation specificity factor subunit 1 (cpsf-1) from Caenorhabditis elegans.